A 130-amino-acid chain; its full sequence is Small ribosomal subunit protein uS11 (130 aa).

It belongs to the universal ribosomal protein uS11 family. In terms of assembly, part of the 30S ribosomal subunit. Interacts with proteins S7 and S18. Binds to IF-3.

Its function is as follows. Located on the platform of the 30S subunit, it bridges several disparate RNA helices of the 16S rRNA. Forms part of the Shine-Dalgarno cleft in the 70S ribosome. This Latilactobacillus sakei subsp. sakei (strain 23K) (Lactobacillus sakei subsp. sakei) protein is Small ribosomal subunit protein uS11.